A 344-amino-acid chain; its full sequence is UDP-N-acetylglucosamine--N-acetylmuramyl-(pentapeptide) pyrophosphoryl-undecaprenol N-acetylglucosamine transferase (344 aa).

Residues 9–11 (TGG), Asn-118, Arg-157, Ser-188, and Gln-282 contribute to the UDP-N-acetyl-alpha-D-glucosamine site.

Belongs to the glycosyltransferase 28 family. MurG subfamily.

It localises to the cell inner membrane. The enzyme catalyses di-trans,octa-cis-undecaprenyl diphospho-N-acetyl-alpha-D-muramoyl-L-alanyl-D-glutamyl-meso-2,6-diaminopimeloyl-D-alanyl-D-alanine + UDP-N-acetyl-alpha-D-glucosamine = di-trans,octa-cis-undecaprenyl diphospho-[N-acetyl-alpha-D-glucosaminyl-(1-&gt;4)]-N-acetyl-alpha-D-muramoyl-L-alanyl-D-glutamyl-meso-2,6-diaminopimeloyl-D-alanyl-D-alanine + UDP + H(+). The protein operates within cell wall biogenesis; peptidoglycan biosynthesis. Functionally, cell wall formation. Catalyzes the transfer of a GlcNAc subunit on undecaprenyl-pyrophosphoryl-MurNAc-pentapeptide (lipid intermediate I) to form undecaprenyl-pyrophosphoryl-MurNAc-(pentapeptide)GlcNAc (lipid intermediate II). This chain is UDP-N-acetylglucosamine--N-acetylmuramyl-(pentapeptide) pyrophosphoryl-undecaprenol N-acetylglucosamine transferase, found in Aquifex aeolicus (strain VF5).